Here is a 446-residue protein sequence, read N- to C-terminus: Eukaryotic translation initiation factor 2 subunit gamma (446 aa).

Residues 21–227 (QATINIGTIG…YIVKKIPIPV (207 aa)) enclose the tr-type G domain. Residues 30 to 37 (GHVAHGKS) are G1. 33–38 (AHGKST) contacts GTP. Residues 58–62 (NITIK) are G2. Residues 114-117 (DCPG) form a G3 region. Residues 170 to 173 (NKVD) and 205 to 207 (SAQ) contribute to the GTP site. A G4 region spans residues 170–173 (NKVD). The interval 205-207 (SAQ) is G5. Positions 436–446 (AKVVEGKTLKV) are interacts with cdc123.

Belongs to the TRAFAC class translation factor GTPase superfamily. Classic translation factor GTPase family. EIF2G subfamily. As to quaternary structure, eukaryotic translation initiation factor 2 eIF2 is a heterotrimeric complex composed of an alpha, a beta and a gamma subunit. The factors eIF-1, eIF-2, eIF-3, TIF5/eIF-5 and methionyl-tRNAi form a multifactor complex (MFC) that may bind to the 40S ribosome. Interacts with cdc123; the interaction is direct.

The protein localises to the cytoplasm. The protein resides in the cytosol. The catalysed reaction is GTP + H2O = GDP + phosphate + H(+). In terms of biological role, as a subunit of eukaryotic initiation factor 2 eIF2, involved in the early steps of protein synthesis. In the presence of GTP, eIF-2 forms a ternary complex with initiator tRNA Met-tRNAi and then recruits the 40S ribosomal complex and initiation factors eIF-1, eIF-1A and eIF-3 to form the 43S pre-initiation complex (43S PIC), a step that determines the rate of protein translation. The 43S PIC binds to mRNA and scans downstream to the initiation codon, where it forms a 48S initiation complex by codon-anticodon base pairing. This leads to the displacement of eIF-1 to allow GTPase-activating protein (GAP) eIF-5-mediated hydrolysis of eIF2-bound GTP. Hydrolysis of GTP and release of Pi, which makes GTP hydrolysis irreversible, causes the release of the eIF-2-GDP binary complex from the 40S subunit, an event that is essential for the subsequent joining of the 60S ribosomal subunit to form an elongation-competent 80S ribosome. In order for eIF-2 to recycle and catalyze another round of initiation, the GDP bound to eIF-2 must be exchanged with GTP by way of a reaction catalyzed by GDP-GTP exchange factor (GEF) eIF-2B. The chain is Eukaryotic translation initiation factor 2 subunit gamma (tif213) from Schizosaccharomyces pombe (strain 972 / ATCC 24843) (Fission yeast).